The following is a 611-amino-acid chain: Inhibitor of apoptosis protein (611 aa).

3 BIR repeats span residues 30–97 (ELYR…CSFV), 176–242 (EEAR…CPFV), and 262–329 (HEAR…CEYL). The Zn(2+) site is built by Cys-299, Cys-302, His-319, and Cys-326. Residues 446 to 536 (VASDDLSLIR…VLYKDLFVEK (91 aa)) enclose the CARD domain. An RING-type zinc finger spans residues 564–599 (CKVCMDKEVSIVFIPCGHLVVCKECAPSLRKCPICR).

This sequence belongs to the IAP family. Cells of the T-lymphocyte lineage. Found in both cortical and medullary cells of the thymus. Expressed at relatively high levels also in spleen, bursa, intestine and lung and at very low levels in testis, brain and skeletal muscle.

Its subcellular location is the nucleus. It localises to the cytoplasm. Apoptotic suppressor. The chain is Inhibitor of apoptosis protein (ITA) from Gallus gallus (Chicken).